A 395-amino-acid chain; its full sequence is Phosphoglycerate kinase (395 aa).

Substrate is bound by residues 21-23 (DIN), Arg-36, 59-62 (HFGR), Arg-114, and Arg-147. ATP contacts are provided by residues Lys-197, Glu-322, and 352–355 (GGDT).

It belongs to the phosphoglycerate kinase family. In terms of assembly, monomer.

The protein resides in the cytoplasm. The catalysed reaction is (2R)-3-phosphoglycerate + ATP = (2R)-3-phospho-glyceroyl phosphate + ADP. The protein operates within carbohydrate degradation; glycolysis; pyruvate from D-glyceraldehyde 3-phosphate: step 2/5. The polypeptide is Phosphoglycerate kinase (Roseobacter denitrificans (strain ATCC 33942 / OCh 114) (Erythrobacter sp. (strain OCh 114))).